The following is a 218-amino-acid chain: Thiopurine S-methyltransferase (218 aa).

4 residues coordinate S-adenosyl-L-methionine: Trp10, Leu45, Glu66, and Arg123.

It belongs to the class I-like SAM-binding methyltransferase superfamily. TPMT family.

Its subcellular location is the cytoplasm. It carries out the reaction S-adenosyl-L-methionine + a thiopurine = S-adenosyl-L-homocysteine + a thiopurine S-methylether.. In Shewanella oneidensis (strain ATCC 700550 / JCM 31522 / CIP 106686 / LMG 19005 / NCIMB 14063 / MR-1), this protein is Thiopurine S-methyltransferase.